The sequence spans 475 residues: Crocetin glucosyltransferase 3 (475 aa).

The active-site Proton acceptor is the His16. His16 is an an anthocyanidin binding site. Asp123 functions as the Charge relay in the catalytic mechanism. 8 residues coordinate UDP-alpha-D-glucose: Thr144, Ala354, Gln356, His371, Trp374, Asn375, Ser376, and Glu379. Position 394 (Ala394) interacts with an anthocyanidin. Residues Glu395 and Gln396 each coordinate UDP-alpha-D-glucose.

This sequence belongs to the UDP-glycosyltransferase family. As to expression, mainly expressed in stamens.

The catalysed reaction is crocetin + UDP-alpha-D-glucose = beta-D-glucosyl crocetin + UDP. It catalyses the reaction beta-D-glucosyl crocetin + UDP-alpha-D-glucose = bis(beta-D-glucosyl) crocetin + UDP. The enzyme catalyses beta-D-gentiobiosyl crocetin + UDP-alpha-D-glucose = beta-D-gentiobiosyl beta-D-glucosyl crocetin + UDP. In terms of biological role, crocetin glucosyltransferase involved in the synthesis of crocin, one of the apocarotenoids responsible for the color and bitter taste of saffron. The chain is Crocetin glucosyltransferase 3 (GLT3) from Crocus sativus (Saffron).